Reading from the N-terminus, the 113-residue chain is Transcriptional regulator RamA (113 aa).

The HTH araC/xylS-type domain occupies 9–107; the sequence is DTIVEWIDDN…NLPPGAYRKE (99 aa). 2 DNA-binding regions (H-T-H motif) span residues 26–47 and 74–97; these read DDIARHAGYSKWHLQRLFMQYK and VYDICLKYGFDSQQTFTRIFTRTF.

Transcriptional regulator. Binds to regulatory regions of target genes, including efflux pump operon acrAB and outer membrane protein gene tolC. Represses transcription of genes belonging to the flagellar regulon, including flhD, flhB and fliC; probably thereby leading to repression of motility. Represses expression of the flhDC operon in a post-transcriptional manner. Activates expression of acrAB, perhaps thereby conferring multidrug resistance. Involved in indole- and bile-mediated regulation of acrAB; binding of bile to RamA may contribute to activation of expression of acrAB. Plays a role in regulating virulence in mice. The protein is Transcriptional regulator RamA of Salmonella typhimurium (strain LT2 / SGSC1412 / ATCC 700720).